The sequence spans 229 residues: Potassium/proton antiporter CemA (229 aa).

A run of 3 helical transmembrane segments spans residues Phe7–Phe27, Ile107–Gly127, and Ile189–Ile209.

This sequence belongs to the CemA family.

It is found in the plastid. It localises to the chloroplast inner membrane. The catalysed reaction is K(+)(in) + H(+)(out) = K(+)(out) + H(+)(in). In terms of biological role, contributes to K(+)/H(+) antiport activity by supporting proton efflux to control proton extrusion and homeostasis in chloroplasts in a light-dependent manner to modulate photosynthesis. Prevents excessive induction of non-photochemical quenching (NPQ) under continuous-light conditions. Indirectly promotes efficient inorganic carbon uptake into chloroplasts. The chain is Potassium/proton antiporter CemA from Guizotia abyssinica (Niger).